A 59-amino-acid chain; its full sequence is Large ribosomal subunit protein uL30 (59 aa).

The protein belongs to the universal ribosomal protein uL30 family. Part of the 50S ribosomal subunit.

This chain is Large ribosomal subunit protein uL30, found in Psychrobacter cryohalolentis (strain ATCC BAA-1226 / DSM 17306 / VKM B-2378 / K5).